The following is a 515-amino-acid chain: 1-pyrroline-5-carboxylate dehydrogenase 2 (515 aa).

Catalysis depends on residues Glu-286 and Cys-320.

Belongs to the aldehyde dehydrogenase family. RocA subfamily.

The enzyme catalyses L-glutamate 5-semialdehyde + NAD(+) + H2O = L-glutamate + NADH + 2 H(+). It functions in the pathway amino-acid degradation; L-proline degradation into L-glutamate; L-glutamate from L-proline: step 2/2. The sequence is that of 1-pyrroline-5-carboxylate dehydrogenase 2 (rocA2) from Halalkalibacterium halodurans (strain ATCC BAA-125 / DSM 18197 / FERM 7344 / JCM 9153 / C-125) (Bacillus halodurans).